The chain runs to 244 residues: Futalosine hydrolase (244 aa).

Belongs to the PNP/UDP phosphorylase family. Futalosine hydrolase subfamily.

The catalysed reaction is futalosine + H2O = dehypoxanthine futalosine + hypoxanthine. It participates in quinol/quinone metabolism; menaquinone biosynthesis. Functionally, catalyzes the hydrolysis of futalosine (FL) to dehypoxanthine futalosine (DHFL) and hypoxanthine, a step in the biosynthesis of menaquinone (MK, vitamin K2). Cannot directly use aminodeoxyfutalosine (AFL) as a substrate. This chain is Futalosine hydrolase, found in Acidothermus cellulolyticus (strain ATCC 43068 / DSM 8971 / 11B).